The chain runs to 495 residues: Potassium voltage-gated channel subfamily A member 1 (495 aa).

The tract at residues 1–30 (MTVMSGENVDEASAAPGHPQDGSYPRQADH) is disordered. A tetramerization domain region spans residues 1 to 128 (MTVMSGENVD…FYELGEEAME (128 aa)). Topologically, residues 1–164 (MTVMSGENVD…LLFEYPESSG (164 aa)) are cytoplasmic. Residue Ser23 is modified to Phosphoserine. Residues 165–186 (PARVIAIVSVMVILISIVIFCL) traverse the membrane as a helical segment. The Extracellular segment spans residues 187–220 (ETLPELKDDKDFTGTVHRIDNTTVIYNSNIFTDP). Asn207 carries an N-linked (GlcNAc...) asparagine glycan. A helical membrane pass occupies residues 221–242 (FFIVETLCIIWFSFELVVRFFA). Cys243 is lipidated: S-palmitoyl cysteine. The Cytoplasmic portion of the chain corresponds to 243 to 253 (CPSKTDFFKNI). Residues 254–274 (MNFIDIVAIIPYFITLGTEIA) form a helical membrane-spanning segment. The Extracellular segment spans residues 275–287 (EQEGNQKGEQATS). The helical; Voltage-sensor transmembrane segment at 288-308 (LAILRVIRLVRVFRIFKLSRH) threads the bilayer. Over 309–323 (SKGLQILGQTLKASM) the chain is Cytoplasmic. The segment at 310–323 (KGLQILGQTLKASM) is S4-S5 linker. Position 322 is a phosphoserine; by PKA (Ser322). A helical membrane pass occupies residues 324–345 (RELGLLIFFLFIGVILFSSAVY). The Extracellular portion of the chain corresponds to 346–359 (FAEAEEAESHFSSI). Residues 360-371 (PDAFWWAVVSMT) constitute an intramembrane region (helical). A Selectivity filter motif is present at residues 372–377 (TVGYGD). Residues 372-379 (TVGYGDMY) lie within the membrane without spanning it. Over 380–386 (PVTIGGK) the chain is Extracellular. A helical transmembrane segment spans residues 387-415 (IVGSLCAIAGVLTIALPVPVIVSNFNYFY). Residues 416 to 495 (HRETEGEEQA…VNKSKLLTDV (80 aa)) are Cytoplasmic-facing. Ser437 and Ser439 each carry phosphoserine. Residue Ser446 is modified to Phosphoserine; by PKA. Positions 493-495 (TDV) match the PDZ-binding motif.

Belongs to the potassium channel family. A (Shaker) (TC 1.A.1.2) subfamily. Kv1.1/KCNA1 sub-subfamily. As to quaternary structure, homotetramer and heterotetramer with other channel-forming alpha subunits, such as KCNA2, KCNA4, KCNA5, KCNA6 and KCNA7. Channel activity is regulated by interaction with the beta subunits KCNAB1 and KCNAB2. Identified in a complex with KCNA2 and KCNAB2. Interacts (via C-terminus) with the PDZ domains of DLG1, DLG2 and DLG4. Interacts with LGI1 within a complex containing LGI1, KCNA4 and KCNAB1. Interacts (via N-terminus) with STX1A; this promotes channel inactivation. Interacts (via N-terminus) with the heterodimer formed by GNB1 and GNG2; this promotes channel inactivation. Can interact simultaneously with STX1A and the heterodimer formed by GNB1 and GNG2. Interacts (via cytoplasmic N-terminal domain) with KCNRG; this inhibits channel activity. Interacts with ANK3; this inhibits channel activity. Interacts with ADAM11. N-glycosylated. Post-translationally, palmitoylated on Cys-243; which may be required for membrane targeting. In terms of processing, phosphorylated on tyrosine residues. Phosphorylation increases in response to NRG1; this inhibits channel activity. Phosphorylation at Ser-446 regulates channel activity by down-regulating expression at the cell membrane. As to expression, detected adjacent to nodes of Ranvier in juxtaparanodal zones in spinal cord nerve fibers, but also in paranodal regions in some myelinated spinal cord axons (at protein level). Detected in the islet of Langerhans.

It is found in the cell membrane. Its subcellular location is the membrane. The protein resides in the cell projection. It localises to the axon. The protein localises to the cytoplasmic vesicle. It is found in the perikaryon. Its subcellular location is the endoplasmic reticulum. The protein resides in the dendrite. It localises to the cell junction. The protein localises to the synapse. It is found in the presynaptic cell membrane. Its subcellular location is the presynapse. The enzyme catalyses K(+)(in) = K(+)(out). Its activity is regulated as follows. Inhibited by 1.1 mM 4-aminopyridine (4-AP) and by 20 mM tetraethylammonium (TEA), but not by charybdotoxin (CTX). Inhibited by dendrotoxin (DTX). Its function is as follows. Voltage-gated potassium channel that mediates transmembrane potassium transport in excitable membranes, primarily in the brain and the central nervous system, but also in the kidney. Contributes to the regulation of the membrane potential and nerve signaling, and prevents neuronal hyperexcitability. Forms tetrameric potassium-selective channels through which potassium ions pass in accordance with their electrochemical gradient. The channel alternates between opened and closed conformations in response to the voltage difference across the membrane. Can form functional homotetrameric channels and heterotetrameric channels that contain variable proportions of KCNA1, KCNA2, KCNA4, KCNA5, KCNA6, KCNA7, and possibly other family members as well; channel properties depend on the type of alpha subunits that are part of the channel. Channel properties are modulated by cytoplasmic beta subunits that regulate the subcellular location of the alpha subunits and promote rapid inactivation of delayed rectifier potassium channels. In vivo, membranes probably contain a mixture of heteromeric potassium channel complexes, making it difficult to assign currents observed in intact tissues to any particular potassium channel family member. Homotetrameric KCNA1 forms a delayed-rectifier potassium channel that opens in response to membrane depolarization, followed by slow spontaneous channel closure. In contrast, a heterotetrameric channel formed by KCNA1 and KCNA4 shows rapid inactivation. Regulates neuronal excitability in hippocampus, especially in mossy fibers and medial perforant path axons, preventing neuronal hyperexcitability. Response to toxins that are selective for KCNA1, respectively for KCNA2, suggests that heteromeric potassium channels composed of both KCNA1 and KCNA2 play a role in pacemaking and regulate the output of deep cerebellar nuclear neurons. May function as down-stream effector for G protein-coupled receptors and inhibit GABAergic inputs to basolateral amygdala neurons. May contribute to the regulation of neurotransmitter release, such as gamma-aminobutyric acid (GABA) release. Plays a role in regulating the generation of action potentials and preventing hyperexcitability in myelinated axons of the vagus nerve, and thereby contributes to the regulation of heart contraction. Required for normal neuromuscular responses. Regulates the frequency of neuronal action potential firing in response to mechanical stimuli, and plays a role in the perception of pain caused by mechanical stimuli, but does not play a role in the perception of pain due to heat stimuli. Required for normal responses to auditory stimuli and precise location of sound sources, but not for sound perception. The use of toxins that block specific channels suggest that it contributes to the regulation of the axonal release of the neurotransmitter dopamine. Required for normal postnatal brain development and normal proliferation of neuronal precursor cells in the brain. Plays a role in the reabsorption of Mg(2+) in the distal convoluted tubules in the kidney and in magnesium ion homeostasis, probably via its effect on the membrane potential. The polypeptide is Potassium voltage-gated channel subfamily A member 1 (Homo sapiens (Human)).